The following is a 414-amino-acid chain: Histidinol dehydrogenase (414 aa).

Residues Y116, Q177, and N200 each contribute to the NAD(+) site. 3 residues coordinate substrate: T223, Q245, and H248. Residues Q245 and H248 each coordinate Zn(2+). Catalysis depends on proton acceptor residues E313 and H314. H314, D347, E401, and H406 together coordinate substrate. D347 is a binding site for Zn(2+). H406 serves as a coordination point for Zn(2+).

The protein belongs to the histidinol dehydrogenase family. Requires Zn(2+) as cofactor.

It catalyses the reaction L-histidinol + 2 NAD(+) + H2O = L-histidine + 2 NADH + 3 H(+). It functions in the pathway amino-acid biosynthesis; L-histidine biosynthesis; L-histidine from 5-phospho-alpha-D-ribose 1-diphosphate: step 9/9. Its function is as follows. Catalyzes the sequential NAD-dependent oxidations of L-histidinol to L-histidinaldehyde and then to L-histidine. This chain is Histidinol dehydrogenase, found in Staphylococcus epidermidis (strain ATCC 35984 / DSM 28319 / BCRC 17069 / CCUG 31568 / BM 3577 / RP62A).